Reading from the N-terminus, the 942-residue chain is DNA mismatch repair protein MutS (942 aa).

613–620 (GPNMAGKS) lines the ATP pocket.

It belongs to the DNA mismatch repair MutS family.

This protein is involved in the repair of mismatches in DNA. It is possible that it carries out the mismatch recognition step. This protein has a weak ATPase activity. This Clostridium botulinum (strain Eklund 17B / Type B) protein is DNA mismatch repair protein MutS.